Consider the following 327-residue polypeptide: Mitochondrial coenzyme A transporter SLC25A42 (327 aa).

Solcar repeat units lie at residues 34-120 (KSVL…YKKL), 132-217 (LTPI…LKKL), and 227-315 (PYTF…TQIL). Transmembrane regions (helical) follow at residues 36 to 56 (VLNS…AVAP), 92 to 112 (LWRG…IQFC), 138 to 158 (LLAG…LDLV), 192 to 209 (GFTP…ISFF), 233 to 253 (LLFG…LDVV), and 296 to 316 (VKGP…QILL).

The protein belongs to the mitochondrial carrier (TC 2.A.29) family.

It is found in the mitochondrion inner membrane. It catalyses the reaction ADP(out) + CoA(in) = ADP(in) + CoA(out). It carries out the reaction 3'-dephospho-CoA(in) + ADP(out) = 3'-dephospho-CoA(out) + ADP(in). The enzyme catalyses adenosine 3',5'-bisphosphate(in) + ADP(out) = adenosine 3',5'-bisphosphate(out) + ADP(in). The catalysed reaction is AMP(in) + ADP(out) = AMP(out) + ADP(in). It catalyses the reaction dADP(in) + ADP(out) = dADP(out) + ADP(in). It carries out the reaction ADP(in) + ATP(out) = ADP(out) + ATP(in). Functionally, mitochondrial carrier mediating the transport of coenzyme A (CoA) in mitochondria in exchange for intramitochondrial (deoxy)adenine nucleotides and adenosine 3',5'-diphosphate. The chain is Mitochondrial coenzyme A transporter SLC25A42 (slc25a42) from Xenopus laevis (African clawed frog).